The primary structure comprises 274 residues: Aliphatic sulfonates import ATP-binding protein SsuB 2 (274 aa).

The ABC transporter domain occupies L21–L242. Residue G53–S60 coordinates ATP.

Belongs to the ABC transporter superfamily. Aliphatic sulfonates importer (TC 3.A.1.17.2) family. The complex is composed of two ATP-binding proteins (SsuB), two transmembrane proteins (SsuC) and a solute-binding protein (SsuA).

It is found in the cell inner membrane. It catalyses the reaction ATP + H2O + aliphatic sulfonate-[sulfonate-binding protein]Side 1 = ADP + phosphate + aliphatic sulfonateSide 2 + [sulfonate-binding protein]Side 1.. Functionally, part of the ABC transporter complex SsuABC involved in aliphatic sulfonates import. Responsible for energy coupling to the transport system. The chain is Aliphatic sulfonates import ATP-binding protein SsuB 2 from Pseudomonas aeruginosa (strain UCBPP-PA14).